Here is a 166-residue protein sequence, read N- to C-terminus: Olee1-like protein (166 aa).

The first 23 residues, 1 to 23 (MAKSIIIQAPALCFLSLLGFAYS), serve as a signal peptide directing secretion. 3 cysteine pairs are disulfide-bonded: C35-C106, C38-C150, and C59-C94.

It belongs to the Ole e I family.

It localises to the secreted. The polypeptide is Olee1-like protein (Betula pendula (European white birch)).